The chain runs to 264 residues: H-2 class II histocompatibility antigen, I-E beta chain (264 aa).

Positions 1–31 (MVWLPRVPCVAAVILLLTVLSPPVALVRNSR) are cleaved as a signal peptide. Positions 32 to 121 (PRFLEYSTSE…IFDNFLVPRR (90 aa)) are beta-1. At 32 to 225 (PRFLEYSTSE…KAQSTSAQNK (194 aa)) the chain is on the extracellular side. Disulfide bonds link Cys-42/Cys-106 and Cys-144/Cys-200. Asn-46 carries N-linked (GlcNAc...) asparagine glycosylation. The interval 122 to 215 (VEPTVTVYPT…SLTDPVTVEW (94 aa)) is beta-2. An Ig-like C1-type domain is found at 124–214 (PTVTVYPTKT…PSLTDPVTVE (91 aa)). Residues 216-225 (KAQSTSAQNK) are connecting peptide. The helical transmembrane segment at 226-248 (MLSGVGGFVLGLLFLGAGLFIYF) threads the bilayer. Over 249–264 (RNQKGQSGLQPTGLLS) the chain is Cytoplasmic.

This sequence belongs to the MHC class II family. Ubiquitinated in immature dendritic cells leading to down-regulation of MHC class II.

The protein resides in the membrane. The chain is H-2 class II histocompatibility antigen, I-E beta chain (H2-Eb1) from Mus musculus (Mouse).